The sequence spans 128 residues: UPF0325 protein CKO_03204 (128 aa).

Belongs to the UPF0325 family.

The chain is UPF0325 protein CKO_03204 from Citrobacter koseri (strain ATCC BAA-895 / CDC 4225-83 / SGSC4696).